A 642-amino-acid polypeptide reads, in one-letter code: Threonine--tRNA ligase (642 aa).

A TGS domain is found at 1–63 (MSEIVVTLPD…TDDCELVIVT (63 aa)). Residues 242-533 (DHRKLGQELD…LIEHFDGNFP (292 aa)) form a catalytic region. Zn(2+) is bound by residues C334, H385, and H510.

It belongs to the class-II aminoacyl-tRNA synthetase family. Homodimer. It depends on Zn(2+) as a cofactor.

It is found in the cytoplasm. The enzyme catalyses tRNA(Thr) + L-threonine + ATP = L-threonyl-tRNA(Thr) + AMP + diphosphate + H(+). Catalyzes the attachment of threonine to tRNA(Thr) in a two-step reaction: L-threonine is first activated by ATP to form Thr-AMP and then transferred to the acceptor end of tRNA(Thr). This chain is Threonine--tRNA ligase, found in Natronomonas pharaonis (strain ATCC 35678 / DSM 2160 / CIP 103997 / JCM 8858 / NBRC 14720 / NCIMB 2260 / Gabara) (Halobacterium pharaonis).